A 130-amino-acid chain; its full sequence is Small ribosomal subunit protein uS8 (130 aa).

This sequence belongs to the universal ribosomal protein uS8 family. In terms of assembly, part of the 30S ribosomal subunit. Contacts proteins S5 and S12.

One of the primary rRNA binding proteins, it binds directly to 16S rRNA central domain where it helps coordinate assembly of the platform of the 30S subunit. The sequence is that of Small ribosomal subunit protein uS8 from Idiomarina loihiensis (strain ATCC BAA-735 / DSM 15497 / L2-TR).